Consider the following 342-residue polypeptide: Phosphate acyltransferase (342 aa).

The protein belongs to the PlsX family. Homodimer. Probably interacts with PlsY.

The protein resides in the cytoplasm. It carries out the reaction a fatty acyl-[ACP] + phosphate = an acyl phosphate + holo-[ACP]. It functions in the pathway lipid metabolism; phospholipid metabolism. Its function is as follows. Catalyzes the reversible formation of acyl-phosphate (acyl-PO(4)) from acyl-[acyl-carrier-protein] (acyl-ACP). This enzyme utilizes acyl-ACP as fatty acyl donor, but not acyl-CoA. The sequence is that of Phosphate acyltransferase from Alkalilimnicola ehrlichii (strain ATCC BAA-1101 / DSM 17681 / MLHE-1).